The primary structure comprises 119 residues: Flagellar transcriptional regulator FlhD (119 aa).

This sequence belongs to the FlhD family. In terms of assembly, homodimer; disulfide-linked. Forms a heterohexamer composed of two FlhC and four FlhD subunits. Each FlhC binds a FlhD dimer, forming a heterotrimer, and a hexamer assembles by dimerization of two heterotrimers.

The protein resides in the cytoplasm. In terms of biological role, functions in complex with FlhC as a master transcriptional regulator that regulates transcription of several flagellar and non-flagellar operons by binding to their promoter region. Activates expression of class 2 flagellar genes, including fliA, which is a flagellum-specific sigma factor that turns on the class 3 genes. Also regulates genes whose products function in a variety of physiological pathways. The chain is Flagellar transcriptional regulator FlhD from Shigella dysenteriae serotype 1 (strain Sd197).